The primary structure comprises 347 residues: MLKKSDFHYDLPEELIAQGPLPERSASRLMLVPSAPEQFQDCYVRDLPELLQPGDLLVFNDTRVIPARLFGRKVSGGRVELLIERFLGTHQAVVQLRTSRSLKVGNRILLDAGGHAEVLGRDGEFYLLSFDVESPLEQWLSDVGQLPLPPYIHREPDEYDRERYQTVFARSVGAVAAPTAGLHFDESLLARLRARGVEFGYITLHVGAGTFQPVRVALLQEHVMHSEWFKVGAELVEQVRSARARGGRVIAVGTTVVRSLESAMRHGELQPFVGETQIFIFPGYCIRSVDAMVTNFHLPESTLLMLVAAFAGRTRILDAYYHAVQQRYRFFSYGDAMLLFPRNAGEQ.

Belongs to the QueA family. In terms of assembly, monomer.

Its subcellular location is the cytoplasm. It catalyses the reaction 7-aminomethyl-7-carbaguanosine(34) in tRNA + S-adenosyl-L-methionine = epoxyqueuosine(34) in tRNA + adenine + L-methionine + 2 H(+). It functions in the pathway tRNA modification; tRNA-queuosine biosynthesis. Its function is as follows. Transfers and isomerizes the ribose moiety from AdoMet to the 7-aminomethyl group of 7-deazaguanine (preQ1-tRNA) to give epoxyqueuosine (oQ-tRNA). The polypeptide is S-adenosylmethionine:tRNA ribosyltransferase-isomerase (Xylella fastidiosa (strain M23)).